An 87-amino-acid chain; its full sequence is UPF0250 protein NE1487 (87 aa).

This sequence belongs to the UPF0250 family.

The sequence is that of UPF0250 protein NE1487 from Nitrosomonas europaea (strain ATCC 19718 / CIP 103999 / KCTC 2705 / NBRC 14298).